The primary structure comprises 129 residues: Ropporin-1 (129 aa).

Residues 11–34 (PELPELLKTQPPDLIQWAAEYFGA) enclose the RIIa domain.

The protein belongs to the ropporin family. Homodimer. Interacts with AKAP3. May interact with SPA17. Interacts with RHPN1. Interacts with FSCB; the interaction increases upon spermatozoa capacitation conditions. Interacts with CFAP61. Post-translationally, sumoylated, sumoylation decreases upon spermatozoa capacitation conditions.

It is found in the cell projection. The protein resides in the cilium. The protein localises to the flagellum. Functionally, important for male fertility. With ROPN1L, involved in fibrous sheath integrity and sperm motility, plays a role in PKA-dependent signaling processes required for spermatozoa capacitation. The polypeptide is Ropporin-1 (Mesocricetus auratus (Golden hamster)).